The primary structure comprises 566 residues: Membrane protein insertase YidC (566 aa).

Helical transmembrane passes span 3 to 23, 346 to 366, 369 to 389, 436 to 456, and 509 to 529; these read IKRI…FNAW, GWLW…HAVV, WGWS…WFSA, GGCL…YVII, and MWIL…GLVL.

The protein belongs to the OXA1/ALB3/YidC family. Type 1 subfamily. In terms of assembly, interacts with the Sec translocase complex via SecD. Specifically interacts with transmembrane segments of nascent integral membrane proteins during membrane integration.

Its subcellular location is the cell inner membrane. Its function is as follows. Required for the insertion and/or proper folding and/or complex formation of integral membrane proteins into the membrane. Involved in integration of membrane proteins that insert both dependently and independently of the Sec translocase complex, as well as at least some lipoproteins. Aids folding of multispanning membrane proteins. The chain is Membrane protein insertase YidC from Coxiella burnetii (strain Dugway 5J108-111).